A 403-amino-acid polypeptide reads, in one-letter code: Imidazolonepropionase (403 aa).

Residues His-74 and His-76 each coordinate Fe(3+). Residues His-74 and His-76 each contribute to the Zn(2+) site. 4-imidazolone-5-propanoate contacts are provided by Arg-83, Tyr-146, and His-179. Residue Tyr-146 coordinates N-formimidoyl-L-glutamate. Residue His-242 coordinates Fe(3+). His-242 contributes to the Zn(2+) binding site. Gln-245 provides a ligand contact to 4-imidazolone-5-propanoate. Position 317 (Asp-317) interacts with Fe(3+). Asp-317 is a Zn(2+) binding site. N-formimidoyl-L-glutamate is bound by residues Asn-319 and Gly-321. 4-imidazolone-5-propanoate is bound at residue Thr-322.

This sequence belongs to the metallo-dependent hydrolases superfamily. HutI family. The cofactor is Zn(2+). Fe(3+) is required as a cofactor.

It localises to the cytoplasm. The catalysed reaction is 4-imidazolone-5-propanoate + H2O = N-formimidoyl-L-glutamate. It participates in amino-acid degradation; L-histidine degradation into L-glutamate; N-formimidoyl-L-glutamate from L-histidine: step 3/3. Functionally, catalyzes the hydrolytic cleavage of the carbon-nitrogen bond in imidazolone-5-propanoate to yield N-formimidoyl-L-glutamate. It is the third step in the universal histidine degradation pathway. This is Imidazolonepropionase from Sphingopyxis alaskensis (strain DSM 13593 / LMG 18877 / RB2256) (Sphingomonas alaskensis).